A 754-amino-acid polypeptide reads, in one-letter code: Phosphatidylinositol 4-phosphate 5-kinase 7 (754 aa).

MORN repeat units follow at residues 16-38 (YSGE…DGTI), 39-61 (YEGD…SGAK), 62-84 (YEGD…DESV), 85-107 (YSGA…NSDL), 108-130 (YDGL…NGNR), 131-153 (YIGN…NGDL), 154-176 (YDGF…DGCL), and 177-198 (YYGT…AGTK). The region spanning 329 to 750 (GEHNYYLMLN…RFVNFLHKVF (422 aa)) is the PIPK domain. Residues 710-731 (YNTKKKVEHTCKSLQYDPMTIS) form an activation loop region.

It carries out the reaction a 1,2-diacyl-sn-glycero-3-phospho-(1D-myo-inositol 4-phosphate) + ATP = a 1,2-diacyl-sn-glycero-3-phospho-(1D-myo-inositol-4,5-bisphosphate) + ADP + H(+). The sequence is that of Phosphatidylinositol 4-phosphate 5-kinase 7 (PIP5K7) from Arabidopsis thaliana (Mouse-ear cress).